The chain runs to 345 residues: Heat-inducible transcription repressor HrcA (345 aa).

The protein belongs to the HrcA family.

Functionally, negative regulator of class I heat shock genes (grpE-dnaK-dnaJ and groELS operons). Prevents heat-shock induction of these operons. In Dehalococcoides mccartyi (strain ATCC BAA-2266 / KCTC 15142 / 195) (Dehalococcoides ethenogenes (strain 195)), this protein is Heat-inducible transcription repressor HrcA.